The chain runs to 144 residues: Large ribosomal subunit protein uL13 (144 aa).

This sequence belongs to the universal ribosomal protein uL13 family. In terms of assembly, part of the 50S ribosomal subunit.

This protein is one of the early assembly proteins of the 50S ribosomal subunit, although it is not seen to bind rRNA by itself. It is important during the early stages of 50S assembly. This is Large ribosomal subunit protein uL13 from Clostridium perfringens (strain 13 / Type A).